The following is a 284-amino-acid chain: Bifunctional protein FolD (284 aa).

Residues 166 to 168 and Ile-232 contribute to the NADP(+) site; that span reads GAS.

The protein belongs to the tetrahydrofolate dehydrogenase/cyclohydrolase family. Homodimer.

The catalysed reaction is (6R)-5,10-methylene-5,6,7,8-tetrahydrofolate + NADP(+) = (6R)-5,10-methenyltetrahydrofolate + NADPH. The enzyme catalyses (6R)-5,10-methenyltetrahydrofolate + H2O = (6R)-10-formyltetrahydrofolate + H(+). Its pathway is one-carbon metabolism; tetrahydrofolate interconversion. In terms of biological role, catalyzes the oxidation of 5,10-methylenetetrahydrofolate to 5,10-methenyltetrahydrofolate and then the hydrolysis of 5,10-methenyltetrahydrofolate to 10-formyltetrahydrofolate. This Shewanella sp. (strain ANA-3) protein is Bifunctional protein FolD.